Consider the following 252-residue polypeptide: Demethylmenaquinone methyltransferase (252 aa).

S-adenosyl-L-methionine-binding positions include threonine 64, aspartate 85, and 112-113 (NA).

This sequence belongs to the class I-like SAM-binding methyltransferase superfamily. MenG/UbiE family.

It carries out the reaction a 2-demethylmenaquinol + S-adenosyl-L-methionine = a menaquinol + S-adenosyl-L-homocysteine + H(+). It participates in quinol/quinone metabolism; menaquinone biosynthesis; menaquinol from 1,4-dihydroxy-2-naphthoate: step 2/2. Methyltransferase required for the conversion of demethylmenaquinol (DMKH2) to menaquinol (MKH2). This is Demethylmenaquinone methyltransferase from Lactococcus lactis subsp. lactis (strain IL1403) (Streptococcus lactis).